The sequence spans 695 residues: Exocyst complex component EXO70C2 (695 aa).

A compositionally biased stretch (basic and acidic residues) spans 1–36; sequence MEKNDKDPDHDDKSKGDEKGDVVSDAHPSDDAHHQD. 2 disordered regions span residues 1 to 71 and 210 to 229; these read MEKN…EEAP and VVTD…QDHQ. The residue at position 212 (Thr212) is a Phosphothreonine. 2 positions are modified to phosphoserine: Ser215 and Ser217. Thr446 carries the post-translational modification Phosphothreonine. 2 positions are modified to phosphoserine: Ser494 and Ser605.

This sequence belongs to the EXO70 family. Interacts with ROH1A and ROH1D independently of its phosphorylation status. Post-translationally, phosphorylation on Ser and Thr residues promotes its ability to repress pollen tube growth and to regulate cellular architecture at the pollen tube tip. In terms of tissue distribution, expressed in anthers, pollen and root trichoblast cells. Also observed in anther tapetum.

It localises to the cytoplasm. Required for optimal tip growth of pollen tube; dose-dependent negative regulator of exocyst function in pollen tube growth and cellular architecture at the pollen tube tip, probably by modulating membrane trafficking and exocytosis dynamics. The chain is Exocyst complex component EXO70C2 from Arabidopsis thaliana (Mouse-ear cress).